The chain runs to 455 residues: Ammonium transporter Rh type B (455 aa).

The Cytoplasmic segment spans residues 1–13 (MAWSPRHSAGRRL). A helical membrane pass occupies residues 14-34 (QLPLLCLLLQGATAILFAVFV). Residues 35–61 (RYNRETDAALWHWGNHSNADNEFYFRY) are Extracellular-facing. N-linked (GlcNAc...) asparagine glycosylation occurs at asparagine 49. Residues 62-82 (PSFQDVHAMIFVGFGFLMVFL) form a helical membrane-spanning segment. The Cytoplasmic segment spans residues 83–86 (QRYG). Residues 87–107 (FGSVGFTFLLAAFALQWSTLI) traverse the membrane as a helical segment. Residues 108–124 (QGFFHSFRGGYILVGME) lie on the Extracellular side of the membrane. A helical transmembrane segment spans residues 125–145 (SMINADFCAGAVLISFGAVLG). Over 146 to 151 (KTGPVQ) the chain is Cytoplasmic. Residues 152–172 (LLLMALLEVVLFGLNEFVLLS) traverse the membrane as a helical segment. The Extracellular segment spans residues 173–179 (LLEVKDA). The helical transmembrane segment at 180–200 (GGSMTIHTFGAYFGLILSRVL) threads the bilayer. Topologically, residues 201-219 (YRPQLEKSKHRQGSVYHSD) are cytoplasmic. Residues 220 to 240 (LFAMIGTIFLWIFWPSFNSAP) traverse the membrane as a helical segment. The Extracellular portion of the chain corresponds to 241–253 (TALGDGQHRTALN). The helical transmembrane segment at 254-274 (TYYSLTASTLSTFALSALVGG) threads the bilayer. At 275 to 277 (DGR) the chain is on the cytoplasmic side. Residues 278-298 (LDMVHVQNAALAGGVVVGTSA) form a helical membrane-spanning segment. A topological domain (extracellular) is located at residue glutamate 299. The chain crosses the membrane as a helical span at residues 300–320 (MMLTPFGALAAGFLAGAISTL). The Cytoplasmic segment spans residues 321–343 (GYKFVTPILESKLKVQDTCGVHN). The chain crosses the membrane as a helical span at residues 344-364 (LHGMPGVLGALLGGLVAGLAT). Over 365–393 (REAYGDGLESVFPLIAEGQRSATSQAMHQ) the chain is Extracellular. A helical transmembrane segment spans residues 394–414 (LFGLFVTLTFASVGGGLGGLL). The Cytoplasmic portion of the chain corresponds to 415–455 (LRLPILDSPPDSQCYEDQIYWEVPGEHEHLAQGSEETETQA). Residues 416–424 (RLPILDSPP) are interaction with ANK3. A Basolateral sorting signal motif is present at residues 429–432 (YEDQ).

This sequence belongs to the ammonium transporter (TC 2.A.49) family. Rh subfamily. Interacts (via C-terminus) with ANK2 and ANK3; required for targeting to the basolateral membrane. N-glycosylated.

Its subcellular location is the cell membrane. The protein localises to the basolateral cell membrane. It carries out the reaction NH4(+)(in) = NH4(+)(out). The catalysed reaction is methylamine(out) = methylamine(in). It catalyses the reaction CO2(out) = CO2(in). In terms of biological role, ammonium transporter involved in the maintenance of acid-base homeostasis. Transports ammonium and its related derivative methylammonium across the basolateral plasma membrane of epithelial cells likely contributing to renal transepithelial ammonia transport and ammonia metabolism. May transport either NH4(+) or NH3 ammonia species predominantly mediating an electrogenic NH4(+) transport. May act as a CO2 channel providing for renal acid secretion. In Bos taurus (Bovine), this protein is Ammonium transporter Rh type B (RHBG).